The following is a 475-amino-acid chain: Ribulose bisphosphate carboxylase large chain (475 aa).

Positions 1–2 (MS) are excised as a propeptide. Pro3 carries the post-translational modification N-acetylproline. Residue Lys14 is modified to N6,N6,N6-trimethyllysine. Substrate-binding residues include Asn123 and Thr173. Catalysis depends on Lys175, which acts as the Proton acceptor. Residue Lys177 participates in substrate binding. Mg(2+) is bound by residues Lys201, Asp203, and Glu204. At Lys201 the chain carries N6-carboxylysine. Residue His294 is the Proton acceptor of the active site. Arg295, His327, and Ser379 together coordinate substrate.

Belongs to the RuBisCO large chain family. Type I subfamily. In terms of assembly, heterohexadecamer of 8 large chains and 8 small chains; disulfide-linked. The disulfide link is formed within the large subunit homodimers. Mg(2+) is required as a cofactor. Post-translationally, the disulfide bond which can form in the large chain dimeric partners within the hexadecamer appears to be associated with oxidative stress and protein turnover.

It localises to the plastid. The protein localises to the chloroplast. It carries out the reaction 2 (2R)-3-phosphoglycerate + 2 H(+) = D-ribulose 1,5-bisphosphate + CO2 + H2O. The enzyme catalyses D-ribulose 1,5-bisphosphate + O2 = 2-phosphoglycolate + (2R)-3-phosphoglycerate + 2 H(+). Functionally, ruBisCO catalyzes two reactions: the carboxylation of D-ribulose 1,5-bisphosphate, the primary event in carbon dioxide fixation, as well as the oxidative fragmentation of the pentose substrate in the photorespiration process. Both reactions occur simultaneously and in competition at the same active site. The polypeptide is Ribulose bisphosphate carboxylase large chain (Lotus japonicus (Lotus corniculatus var. japonicus)).